Consider the following 304-residue polypeptide: Lipid droplet-associated triacylglycerol lipase (304 aa).

Topologically, residues 1 to 155 are lumenal; that stretch reads MTVKEYTKSK…MGIKMTAALR (155 aa). Asn95 carries N-linked (GlcNAc...) asparagine glycosylation. Positions 107-111 match the GXSXG motif; it reads GHSVG. The Nucleophile role is filled by Ser109. An intramembrane segment occupies 156–176; the sequence is YIPPLAHVVSLFSYIFFYWIL. Over 177 to 304 the chain is Lumenal; it reads SEGFSRFIID…HAEYAINAFF (128 aa).

It belongs to the AB hydrolase superfamily. LDAH family.

The protein resides in the lipid droplet. It is found in the membrane. The catalysed reaction is a triacylglycerol + H2O = a diacylglycerol + a fatty acid + H(+). Functionally, shows both triacylglycerol (TAG) lipase and ester hydrolase activities. May play a role in TAG homeostasis. This Saccharomyces cerevisiae (strain ATCC 204508 / S288c) (Baker's yeast) protein is Lipid droplet-associated triacylglycerol lipase.